A 1430-amino-acid chain; its full sequence is MRLTNEKATMQPQLSDLALVLGLLICCLPTLTWAATLSDKRLCADPKCEQIISMGIAKITYAIGGEGLISFKINSPIRVLSKSAGSNMQLWGVDINGRRGYANKDFIMEKKILVRDKDLLYEVPVVGPGSPVQSVETPVQSVETTVQPVLNASESTDDLATTTTSPLEIAVDSIVVEHDKLQDQQVPDPTAASKAQVQVIEGTELPLEAIAATTEGSIVPETAADPQEATNLDSTVVDTKEPQALNSEAIKLQEEPKAQQPATEAEKPPPLPQAINAELEDADDFDYGDDETDDDSQQGSQDNESIVEIANDNKSINESIELKPLSVAQLKKTDKVEDSKDETKEKHAEMEVSKQEDSSLPTETLNVTALEEQIDQKEFPKQVLDAAVELKSSDPLPVEEVTETVAEPPRTIVEDKINEEIVPVSAKIQAKPATVNPTEPIVAQSDAEIKAPSESVISSTTPAPVVEEAPQKADPVGLPPLFEKKNFENPNNYYKQLQEEQEKQRLVAEAEEQKRLQEEADQQKRLQEEAALNKRLLEEAEQQKRLQEEAEQQKRLQEEAELNKRLLEEAEKQKRLHEESEQLQRSSEEAEPQLSVQEANMQQLNDSVDSQSNEIVDNNNRQQPEQYQQHHHHTESAFNHPSTASHTTPTPDAESPYAAVQEETTEASQTDNHREGVGYVEPVALPATASPVSEVPIKEDAAGFGLFATIVDTVNNFIGKDPQSDPADSSDELHRILYPGRPEVPPSQRKAEDFAPADVDGYCARFQAKDEHCHRSISLDNFVEVMADKLVDHSQLLLCVVIAAISSLFFMFAYYCFCNSSQEGALLSKLNHLERSLLASHKENLIIKHDLMTTRTKLASIEDNSFGSNDMVADLKKQLESELYEKAKLQEQVGSLERDLDNAAEAGLELNKMLSEVLNGQNGDEAFMSTVDELQRQLNDQEKIIIEINNSLAEKSRENSELQYTFTEATTRLNSELKTLQEDNYELEMEKSKLQTRLQEIQAETESELAKALEARNYEMQKLQNQIVELTVKWEREHGDLQTSLAKIEALEDCLKAVGKDAIHNVQELITSAKTRGELNAVHKKLVELQSKVEQEEAHKQRLESQLQQSSQDVEQLKQDFNQSERDKLEAQTRLEVLSGYFREKENDLKKELSLQETKWLQHQGENASTVETQTLMKNEIQTLKSQNDELRAEIEAQIASHKAQMGTLENRAHESWLAARQSERRCEEALAEAASLRRKLTTMASGGGGVGGDPGVMEAIAANGTSVLGAELKTAPSPLPLPGSPLLNMPNPLPFLAAPFSPFMGLPPPFLPPTGAGGARPPPLGRMRSPPPSSRGDRDRERYSDYSDYDDYDDDEEDDRGMDRRRRHSGSWGRRHRGSYSHSPRTYRSLSPSDSRYNYNDTETDFSPPPSPPPVPSGRSATSRPYSEV.

The N-terminal stretch at 1 to 34 is a signal peptide; the sequence is MRLTNEKATMQPQLSDLALVLGLLICCLPTLTWA. Residues 35-796 are Extracellular-facing; that stretch reads ATLSDKRLCA…ADKLVDHSQL (762 aa). Residues 50–112 enclose the SH3 domain; sequence QIISMGIAKI…NKDFIMEKKI (63 aa). Disordered regions lie at residues 253–272, 284–303, 318–362, 445–524, and 568–673; these read QEEP…PPLP, DFDY…SQDN, ESIE…SLPT, SDAE…DQQK, and EEAE…TDNH. Residues 284-296 show a composition bias toward acidic residues; the sequence is DFDYGDDETDDDS. Basic and acidic residues-rich tracts occupy residues 331–357, 497–524, and 568–588; these read KKTD…KQED, LQEE…DQQK, and EEAE…RSSE. Residues 494–620 adopt a coiled-coil conformation; sequence YKQLQEEQEK…QSNEIVDNNN (127 aa). Polar residues predominate over residues 594-621; sequence LSVQEANMQQLNDSVDSQSNEIVDNNNR. Residues 640 to 651 are compositionally biased toward low complexity; the sequence is HPSTASHTTPTP. A helical transmembrane segment spans residues 797-817; that stretch reads LLCVVIAAISSLFFMFAYYCF. Over 818-1430 the chain is Cytoplasmic; that stretch reads CNSSQEGALL…SATSRPYSEV (613 aa). Residues S865 and S868 each carry the phosphoserine modification. A coiled-coil region spans residues 869-1245; sequence NDMVADLKKQ…SLRRKLTTMA (377 aa). Over residues 1105–1114 the composition is skewed to low complexity; sequence SQLQQSSQDV. 2 disordered regions span residues 1105-1126 and 1312-1430; these read SQLQ…QSER and LPPT…YSEV. The segment covering 1115–1126 has biased composition (basic and acidic residues); it reads EQLKQDFNQSER. Over residues 1321–1334 the composition is skewed to pro residues; the sequence is RPPPLGRMRSPPPS. Residues 1336–1346 are compositionally biased toward basic and acidic residues; it reads RGDRDRERYSD. Residues S1345 and S1348 each carry the phosphoserine modification. A compositionally biased stretch (acidic residues) spans 1348–1361; the sequence is SDYDDYDDDEEDDR. Basic residues predominate over residues 1364 to 1380; sequence DRRRRHSGSWGRRHRGS. The segment covering 1387-1402 has biased composition (polar residues); that stretch reads TYRSLSPSDSRYNYND. Phosphoserine is present on residues S1390 and S1392. Residues 1408–1417 show a composition bias toward pro residues; it reads SPPPSPPPVP. Positions 1420 to 1430 are enriched in polar residues; it reads RSATSRPYSEV.

It belongs to the MIA/OTOR family. Tango1 subfamily.

The protein resides in the golgi apparatus membrane. It is found in the golgi apparatus. It localises to the trans-Golgi network. In terms of biological role, required for protein secretion. May participate in cargo loading by binding to COPII coat subunits and guiding SH3-bound proteins into a growing carrier. At basal transitional ER sites in follicle epithelial cells, mediates the exit of basal membrane protein such as vkg, LanB1 and Trol, from the endoplasmic reticulum (ER) to basal Golgi clusters. In Drosophila melanogaster (Fruit fly), this protein is Transport and Golgi organization protein 1.